The sequence spans 865 residues: Aconitate hydratase B (865 aa).

Substrate is bound by residues Arg191, 244–246 (SSR), 414–416 (QDT), and Ser498. The [4Fe-4S] cluster site is built by Cys710, Cys769, and Cys772. Substrate is bound by residues Arg791 and Arg796.

Belongs to the aconitase/IPM isomerase family. As to quaternary structure, monomer. AcnB can also form a homodimer. The monomer-homodimer transition is dependent on iron availability and the carboxymethylation of C-273 inhibits the dimer formation. It depends on [4Fe-4S] cluster as a cofactor.

The enzyme catalyses citrate = D-threo-isocitrate. It carries out the reaction (2S,3R)-3-hydroxybutane-1,2,3-tricarboxylate = 2-methyl-cis-aconitate + H2O. The protein operates within organic acid metabolism; propanoate degradation. Its pathway is carbohydrate metabolism; tricarboxylic acid cycle; isocitrate from oxaloacetate: step 2/2. Involved in the catabolism of short chain fatty acids (SCFA) via the tricarboxylic acid (TCA)(acetyl degradation route) and the 2-methylcitrate cycle I (propionate degradation route). Catalyzes the reversible isomerization of citrate to isocitrate via cis-aconitate. Also catalyzes the hydration of 2-methyl-cis-aconitate to yield (2R,3S)-2-methylisocitrate. The apo form of AcnB functions as a RNA-binding regulatory protein. During oxidative stress inactive AcnB apo-enzyme without iron sulfur clusters binds the acnB mRNA 3' UTRs (untranslated regions), stabilizes acnB mRNA and increases AcnB synthesis, thus mediating a post-transcriptional positive autoregulatory switch. AcnB also decreases the stability of the sodA transcript. The polypeptide is Aconitate hydratase B (Escherichia coli (strain K12)).